Reading from the N-terminus, the 403-residue chain is S-adenosylmethionine synthase (403 aa).

Position 17 (His17) interacts with ATP. Asp19 serves as a coordination point for Mg(2+). Glu45 lines the K(+) pocket. L-methionine contacts are provided by Glu58 and Gln101. Residues 101–111 (QSPDIAMGVDR) are flexible loop. ATP contacts are provided by residues 177–179 (DGK), 244–245 (RF), Asp253, 259–260 (RK), Ala276, and Lys280. Asp253 is an L-methionine binding site. Lys284 contacts L-methionine.

Belongs to the AdoMet synthase family. Homotetramer; dimer of dimers. It depends on Mg(2+) as a cofactor. K(+) serves as cofactor.

The protein localises to the cytoplasm. It catalyses the reaction L-methionine + ATP + H2O = S-adenosyl-L-methionine + phosphate + diphosphate. The protein operates within amino-acid biosynthesis; S-adenosyl-L-methionine biosynthesis; S-adenosyl-L-methionine from L-methionine: step 1/1. Catalyzes the formation of S-adenosylmethionine (AdoMet) from methionine and ATP. The overall synthetic reaction is composed of two sequential steps, AdoMet formation and the subsequent tripolyphosphate hydrolysis which occurs prior to release of AdoMet from the enzyme. The sequence is that of S-adenosylmethionine synthase from Geobacillus kaustophilus (strain HTA426).